The following is a 347-amino-acid chain: NADH-quinone oxidoreductase subunit H (347 aa).

Transmembrane regions (helical) follow at residues 14–34 (IMIG…AYIL), 82–102 (AVFL…WAVI), 115–135 (VGIL…IMGG), 161–181 (IGFV…TDIV), 198–218 (LLDW…ISAL), 258–278 (AIVL…LPPL), 285–305 (WVPG…MFGI), and 321–341 (LGWK…AFVL).

The protein belongs to the complex I subunit 1 family. In terms of assembly, NDH-1 is composed of 14 different subunits. Subunits NuoA, H, J, K, L, M, N constitute the membrane sector of the complex.

It localises to the cell inner membrane. It carries out the reaction a quinone + NADH + 5 H(+)(in) = a quinol + NAD(+) + 4 H(+)(out). Its function is as follows. NDH-1 shuttles electrons from NADH, via FMN and iron-sulfur (Fe-S) centers, to quinones in the respiratory chain. The immediate electron acceptor for the enzyme in this species is believed to be ubiquinone. Couples the redox reaction to proton translocation (for every two electrons transferred, four hydrogen ions are translocated across the cytoplasmic membrane), and thus conserves the redox energy in a proton gradient. This subunit may bind ubiquinone. This chain is NADH-quinone oxidoreductase subunit H, found in Allorhizobium ampelinum (strain ATCC BAA-846 / DSM 112012 / S4) (Agrobacterium vitis (strain S4)).